Reading from the N-terminus, the 199-residue chain is ATP-dependent Clp protease proteolytic subunit (199 aa).

The tract at residues 1–23 (MTTSAARKGLRTRGSACPRATRS) is disordered. Ser-100 serves as the catalytic Nucleophile. Residue His-125 is part of the active site.

This sequence belongs to the peptidase S14 family. As to quaternary structure, fourteen ClpP subunits assemble into 2 heptameric rings which stack back to back to give a disk-like structure with a central cavity, resembling the structure of eukaryotic proteasomes.

It localises to the cytoplasm. It catalyses the reaction Hydrolysis of proteins to small peptides in the presence of ATP and magnesium. alpha-casein is the usual test substrate. In the absence of ATP, only oligopeptides shorter than five residues are hydrolyzed (such as succinyl-Leu-Tyr-|-NHMec, and Leu-Tyr-Leu-|-Tyr-Trp, in which cleavage of the -Tyr-|-Leu- and -Tyr-|-Trp bonds also occurs).. Functionally, cleaves peptides in various proteins in a process that requires ATP hydrolysis. Has a chymotrypsin-like activity. Plays a major role in the degradation of misfolded proteins. The protein is ATP-dependent Clp protease proteolytic subunit of Paracoccus denitrificans.